A 363-amino-acid chain; its full sequence is Diheme-cytochrome-encapsulin shell fusion protein (363 aa).

Residues 1 to 36 form the signal peptide; sequence MVMGILNTFKKVYAVTGFFALLAVFSLSQVGSSAFA. Residues 37–74 form a diheme c-type cytochrome region; that stretch reads ACAKVDDCFSCHTTQELNAVHKNTPYQGQSCIVCHKAF. Residues C44, C47, H48, C67, C70, and H71 each coordinate heme. The tract at residues 75-94 is linker; sequence AADDTCSDAKDGRFAKISSE. Residues 95–363 are encapsulin domain; that stretch reads ININKEDWNK…KCPQAICTLE (269 aa).

This sequence belongs to the encapsulin family. Family 1 subfamily. As to quaternary structure, the encapsulin nanocompartment is probably formed by 180 monomers, with the N-terminus (diheme domain) inside. There are 36 pores where the pentamers meet as well as 3-fold axis channels and dimer channels. Heme serves as cofactor.

It localises to the encapsulin nanocompartment. In terms of biological role, fusion of the shell and cargo protein of a type 1 encapsulin nanocompartment. Protein missing its signal peptide makes 33 nm particles in E.coli (called cEnc), protein missing its signal peptide and diheme domain (residues 1-86, called Enc) makes 29 nm particles. The cEnc nancompartment encloses c-type heme. The cargo protein NIR-HAO (AC P0DV45) is probably targeted to the nanocompartment by its association with the diheme domain in cEnc; removal of the diheme domain in Enc halves the amount of cargo. In Kuenenia stuttgartiensis, this protein is Diheme-cytochrome-encapsulin shell fusion protein.